The chain runs to 295 residues: Secreted frizzled-related protein 2 (295 aa).

The signal sequence occupies residues 1-24; the sequence is MPRGPASLLLLVLASHCCLGSARG. The FZ domain maps to 35–155; the sequence is YKRSNCKPIP…PQDNDLCIPL (121 aa). 8 cysteine pairs are disulfide-bonded: C40–C103, C50–C96, C87–C125, C114–C152, C118–C142, C172–C245, C175–C247, and C190–C295. The NTR domain occupies 172–295; it reads CEACKTKNED…ISRSIRKLQC (124 aa).

Belongs to the secreted frizzled-related protein (sFRP) family. Highly expressed in the eye. Weaker expression in heart and lung.

The protein resides in the secreted. Its function is as follows. Soluble frizzled-related proteins (sFRPS) function as modulators of Wnt signaling through direct interaction with Wnts. They have a role in regulating cell growth and differentiation in specific cell types. SFRP2 may be important for eye retinal development and for myogenesis. This Mus musculus (Mouse) protein is Secreted frizzled-related protein 2.